The primary structure comprises 403 residues: tRNA(Met) cytidine acetate ligase (403 aa).

ATP is bound by residues 7-20 (VVEY…HAYH), glycine 101, asparagine 164, and 189-190 (RI).

Belongs to the TmcAL family.

The protein localises to the cytoplasm. The catalysed reaction is cytidine(34) in elongator tRNA(Met) + acetate + ATP = N(4)-acetylcytidine(34) in elongator tRNA(Met) + AMP + diphosphate. Functionally, catalyzes the formation of N(4)-acetylcytidine (ac(4)C) at the wobble position of elongator tRNA(Met), using acetate and ATP as substrates. First activates an acetate ion to form acetyladenylate (Ac-AMP) and then transfers the acetyl group to tRNA to form ac(4)C34. The chain is tRNA(Met) cytidine acetate ligase from Lysinibacillus sphaericus (strain C3-41).